A 513-amino-acid chain; its full sequence is Arabinoxylan arabinofuranohydrolase (513 aa).

Residues 1-26 (MRKKCSVCLWILVLLLSCLSGKSAYA) form the signal peptide. The active-site Proton acceptor is the Asp-50. The active-site Proton donor is Glu-251. Asn-314 is a binding site for substrate. A CBM6 domain is found at 382–511 (NRVEAETFAW…LFNFDYWQFT (130 aa)). Positions 385, 387, 409, 410, and 506 each coordinate Ca(2+).

It localises to the secreted. It catalyses the reaction Hydrolysis of terminal non-reducing alpha-L-arabinofuranoside residues in alpha-L-arabinosides.. It functions in the pathway glycan degradation; xylan degradation. Its function is as follows. Cleaves arabinose units from O-2- or O-3-monosubstituted xylose residues, thereby assisting in arabinoxylan (AX) and short-chain arabinoxylo-oligosaccharide (AXOS) degradation. Is more active on wheat bran AXOS than on wheat water-extractable AX and rye water-extractable AX. Does not display endoxylanase, xylosidase or arabinanase activity. The chain is Arabinoxylan arabinofuranohydrolase (xynD) from Bacillus subtilis (strain 168).